The following is a 177-amino-acid chain: Large ribosomal subunit protein uL10 (177 aa).

The protein belongs to the universal ribosomal protein uL10 family. As to quaternary structure, part of the ribosomal stalk of the 50S ribosomal subunit. The N-terminus interacts with L11 and the large rRNA to form the base of the stalk. The C-terminus forms an elongated spine to which L12 dimers bind in a sequential fashion forming a multimeric L10(L12)X complex.

In terms of biological role, forms part of the ribosomal stalk, playing a central role in the interaction of the ribosome with GTP-bound translation factors. The protein is Large ribosomal subunit protein uL10 of Variovorax paradoxus (strain S110).